The primary structure comprises 291 residues: uncharacterized protein (291 aa).

This is an uncharacterized protein from Lymantria dispar multicapsid nuclear polyhedrosis virus (LdMNPV).